The sequence spans 217 residues: L-lactate dehydrogenase B chain (217 aa).

Asparagine 22 is a binding site for NAD(+). Asparagine 22 and arginine 53 together coordinate substrate. The Proton acceptor role is filled by histidine 77. At tyrosine 123 the chain carries Phosphotyrosine. Substrate is bound at residue threonine 132. Lysine 212 carries the post-translational modification N6-acetyllysine.

This sequence belongs to the LDH/MDH superfamily. LDH family. As to quaternary structure, homotetramer. Interacts with PTEN upstream reading frame protein MP31; the interaction leads to inhibition of mitochondrial lactate dehydrogenase activity, preventing conversion of lactate to pyruvate in mitochondria.

It localises to the cytoplasm. The protein resides in the mitochondrion inner membrane. It catalyses the reaction (S)-lactate + NAD(+) = pyruvate + NADH + H(+). It functions in the pathway fermentation; pyruvate fermentation to lactate; (S)-lactate from pyruvate: step 1/1. Functionally, interconverts simultaneously and stereospecifically pyruvate and lactate with concomitant interconversion of NADH and NAD(+). This chain is L-lactate dehydrogenase B chain (LDHB), found in Oryctolagus cuniculus (Rabbit).